A 282-amino-acid chain; its full sequence is 2-dehydro-3-deoxyphosphooctonate aldolase (282 aa).

This sequence belongs to the KdsA family.

The protein resides in the cytoplasm. It catalyses the reaction D-arabinose 5-phosphate + phosphoenolpyruvate + H2O = 3-deoxy-alpha-D-manno-2-octulosonate-8-phosphate + phosphate. Its pathway is carbohydrate biosynthesis; 3-deoxy-D-manno-octulosonate biosynthesis; 3-deoxy-D-manno-octulosonate from D-ribulose 5-phosphate: step 2/3. It functions in the pathway bacterial outer membrane biogenesis; lipopolysaccharide biosynthesis. This Shewanella oneidensis (strain ATCC 700550 / JCM 31522 / CIP 106686 / LMG 19005 / NCIMB 14063 / MR-1) protein is 2-dehydro-3-deoxyphosphooctonate aldolase.